A 984-amino-acid chain; its full sequence is Glycine dehydrogenase (decarboxylating) (984 aa).

Lys702 is subject to N6-(pyridoxal phosphate)lysine.

Belongs to the GcvP family. In terms of assembly, the glycine cleavage system is composed of four proteins: P, T, L and H. Pyridoxal 5'-phosphate is required as a cofactor.

The catalysed reaction is N(6)-[(R)-lipoyl]-L-lysyl-[glycine-cleavage complex H protein] + glycine + H(+) = N(6)-[(R)-S(8)-aminomethyldihydrolipoyl]-L-lysyl-[glycine-cleavage complex H protein] + CO2. In terms of biological role, the glycine cleavage system catalyzes the degradation of glycine. The P protein binds the alpha-amino group of glycine through its pyridoxal phosphate cofactor; CO(2) is released and the remaining methylamine moiety is then transferred to the lipoamide cofactor of the H protein. The sequence is that of Glycine dehydrogenase (decarboxylating) from Xanthomonas oryzae pv. oryzae (strain MAFF 311018).